Reading from the N-terminus, the 226-residue chain is ATP-dependent dethiobiotin synthetase BioD (226 aa).

12-17 (GVGKTV) serves as a coordination point for ATP. Thr-16 contacts Mg(2+). Lys-37 is a catalytic residue. Thr-41 contributes to the substrate binding site. ATP is bound by residues Asp-49, 108–111 (EGAG), 169–170 (GS), and 197–199 (PAG). Mg(2+) is bound by residues Asp-49 and Glu-108.

The protein belongs to the dethiobiotin synthetase family. As to quaternary structure, homodimer. Requires Mg(2+) as cofactor.

Its subcellular location is the cytoplasm. The enzyme catalyses (7R,8S)-7,8-diammoniononanoate + CO2 + ATP = (4R,5S)-dethiobiotin + ADP + phosphate + 3 H(+). It participates in cofactor biosynthesis; biotin biosynthesis; biotin from 7,8-diaminononanoate: step 1/2. In terms of biological role, catalyzes a mechanistically unusual reaction, the ATP-dependent insertion of CO2 between the N7 and N8 nitrogen atoms of 7,8-diaminopelargonic acid (DAPA, also called 7,8-diammoniononanoate) to form a ureido ring. This Mycobacterium bovis (strain ATCC BAA-935 / AF2122/97) protein is ATP-dependent dethiobiotin synthetase BioD.